Consider the following 201-residue polypeptide: Large ribosomal subunit protein uL4 (201 aa).

Positions 43 to 69 (TKAQKTRSEVAGGGKKPWRQKGTGRAR) are disordered.

It belongs to the universal ribosomal protein uL4 family. Part of the 50S ribosomal subunit.

One of the primary rRNA binding proteins, this protein initially binds near the 5'-end of the 23S rRNA. It is important during the early stages of 50S assembly. It makes multiple contacts with different domains of the 23S rRNA in the assembled 50S subunit and ribosome. Its function is as follows. Forms part of the polypeptide exit tunnel. This Idiomarina loihiensis (strain ATCC BAA-735 / DSM 15497 / L2-TR) protein is Large ribosomal subunit protein uL4.